The following is a 300-amino-acid chain: 33 kDa chaperonin (300 aa).

Intrachain disulfides connect Cys-235/Cys-237 and Cys-269/Cys-272.

It belongs to the HSP33 family. In terms of processing, under oxidizing conditions two disulfide bonds are formed involving the reactive cysteines. Under reducing conditions zinc is bound to the reactive cysteines and the protein is inactive.

The protein resides in the cytoplasm. In terms of biological role, redox regulated molecular chaperone. Protects both thermally unfolding and oxidatively damaged proteins from irreversible aggregation. Plays an important role in the bacterial defense system toward oxidative stress. This is 33 kDa chaperonin from Pseudomonas savastanoi pv. phaseolicola (strain 1448A / Race 6) (Pseudomonas syringae pv. phaseolicola (strain 1448A / Race 6)).